The primary structure comprises 725 residues: G-quartet DNA-binding protein TGP1 (725 aa).

Positions 241-258 (KKALTDVLQIHEKKERVH) match the Nuclear localization signal motif. 2 disordered regions span residues 252-284 (EKKE…LQET) and 468-614 (EIHK…GKRG). The span at 256-277 (RVHKQQNKNKNPRNAHKNHNRQ) shows a compositional bias: basic residues. The segment covering 468 to 478 (EIHKIDRERKR) has biased composition (basic and acidic residues). Low complexity predominate over residues 517–544 (NKYKNTSVQNNNNNKNQQRSQSQNQRPP). A compositionally biased stretch (basic and acidic residues) spans 545–564 (RNYDNRQGGENRNNRQRNEN). Low complexity predominate over residues 565–593 (NRNNFNGNGHRVNNQNNQRNRNSSYPRNN).

The N-terminus is blocked.

Its subcellular location is the nucleus. Functionally, binds specifically to parallel G4-DNA, a four-stranded structure stabilized by tetrads of hydrogen-bonded guanines. This is G-quartet DNA-binding protein TGP1 (TGP1) from Tetrahymena thermophila.